The sequence spans 395 residues: S-adenosylmethionine synthase (395 aa).

Position 16 (His16) interacts with ATP. Asp18 contacts Mg(2+). Glu44 lines the K(+) pocket. Residues Glu57 and Gln100 each coordinate L-methionine. The flexible loop stretch occupies residues Gln100–Asp110. Residues Asp174–Lys176, Arg241–Phe242, Asp250, Arg256–Lys257, Ala273, and Lys277 each bind ATP. Residue Asp250 participates in L-methionine binding. Residue Lys281 coordinates L-methionine.

This sequence belongs to the AdoMet synthase family. Homotetramer; dimer of dimers. Requires Mg(2+) as cofactor. The cofactor is K(+).

Its subcellular location is the cytoplasm. It carries out the reaction L-methionine + ATP + H2O = S-adenosyl-L-methionine + phosphate + diphosphate. It participates in amino-acid biosynthesis; S-adenosyl-L-methionine biosynthesis; S-adenosyl-L-methionine from L-methionine: step 1/1. Functionally, catalyzes the formation of S-adenosylmethionine (AdoMet) from methionine and ATP. The overall synthetic reaction is composed of two sequential steps, AdoMet formation and the subsequent tripolyphosphate hydrolysis which occurs prior to release of AdoMet from the enzyme. The protein is S-adenosylmethionine synthase of Levilactobacillus brevis (strain ATCC 367 / BCRC 12310 / CIP 105137 / JCM 1170 / LMG 11437 / NCIMB 947 / NCTC 947) (Lactobacillus brevis).